A 306-amino-acid chain; its full sequence is Aquaporin-1 (306 aa).

Over residues 1–23 (MASTHSSLTTVQNNANNKSNRTL) the composition is skewed to polar residues. The tract at residues 1–24 (MASTHSSLTTVQNNANNKSNRTLN) is disordered. Residues 1 to 59 (MASTHSSLTTVQNNANNKSNRTLNTERRLSMESSVFTLYNKAADELDTSQRSAFQACHR) are Cytoplasmic-facing. A helical transmembrane segment spans residues 60–80 (EFLAEFIGTVILVLLTCGFCA). Over 81–92 (EQTLHIEESKSW) the chain is Extracellular. Residues 93–113 (LTSSFGSGLSVLIGICVSGHV) traverse the membrane as a helical segment. Residues 114 to 145 (SGAHLNPAVTIAFCIFSGFPIRKVPSYITAQL) lie on the Cytoplasmic side of the membrane. The short motif at 119–121 (NPA) is the NPA 1 element. Residues 146–166 (LGAFAGAALLYIIIEPAIVQF) traverse the membrane as a helical segment. Residues 167–192 (DGGQRYILGEKSTAGIFGTYPPLYVG) lie on the Extracellular side of the membrane. Residues 193–213 (IGSAIASEIMGTAMLLLVIMV) form a helical membrane-spanning segment. Topologically, residues 214 to 226 (TGHPNNLPYKSAQ) are cytoplasmic. The chain crosses the membrane as a helical span at residues 227 to 247 (GAMIALGITTISLCIGYTSGF). The Extracellular segment spans residues 248 to 278 (SLNPARDFGPRLFTAIAGWGFDVFKVYHYYA). The NPA 2 motif lies at 250–252 (NPA). A helical transmembrane segment spans residues 279 to 299 (LVPMFAPILGGLVGLMLMMPF). The Cytoplasmic segment spans residues 300–306 (SFLSVRA).

It belongs to the MIP/aquaporin (TC 1.A.8) family.

The protein localises to the cell membrane. The catalysed reaction is H2O(in) = H2O(out). Its function is as follows. Water channel required to facilitate the transport of water across membranes. Contributes to water uptake of spores during the early stages of spore germination. Aquaporins AQP1 and AQP2 act as extracellular pH sensors and enable the spores to hydrate under favorable conditions and to commence germination. Wounded vegetables and fruit present acidic pH, so the optimal pH range for germination is adapted to the relevant host pH. This Rhizopus delemar (strain RA 99-880 / ATCC MYA-4621 / FGSC 9543 / NRRL 43880) (Mucormycosis agent) protein is Aquaporin-1.